A 411-amino-acid polypeptide reads, in one-letter code: MPKKFGRIHLVVMDSVGIGAAPDADKFFNHDVETHEAINDVKSDTIGHISEIRGLDVPNLQKLGWGNIPRESPLKTIPAAQKPAAYVTKLEEISKGKDTMTGHWEIMGLNIQTPFPTYPEGYPEDLLEKIEEFSGRKIIREANKPYSGTAVIEDFGPRQLETGELIIYTSADPVLQIAAHEDVISREELYKICEYVRSITLEGSGIMIGRIIARPYVGEAGNFERTDGRRDYALSPFAETVLEKLYKAGIDTYSVGKISDIFNTVGVKYDMGHNHNDMDGVDRLLKAMTKTEFTEGFSFTNLVDFDAKYGHRRDVEGYGKAIEDFDGRLPEIIDAMKEDDLLMITADHGNDPSYVGTDHTREYIPLVIFSKSFKEPKVLPVGHFADISATIAENFSVKKAQTGESFLDALV.

Positions 14, 306, 311, 347, 348, and 359 each coordinate Mn(2+).

The protein belongs to the phosphopentomutase family. Mn(2+) serves as cofactor.

It is found in the cytoplasm. The catalysed reaction is 2-deoxy-alpha-D-ribose 1-phosphate = 2-deoxy-D-ribose 5-phosphate. The enzyme catalyses alpha-D-ribose 1-phosphate = D-ribose 5-phosphate. It participates in carbohydrate degradation; 2-deoxy-D-ribose 1-phosphate degradation; D-glyceraldehyde 3-phosphate and acetaldehyde from 2-deoxy-alpha-D-ribose 1-phosphate: step 1/2. In terms of biological role, isomerase that catalyzes the conversion of deoxy-ribose 1-phosphate (dRib-1-P) and ribose 1-phosphate (Rib-1-P) to deoxy-ribose 5-phosphate (dRib-5-P) and ribose 5-phosphate (Rib-5-P), respectively. The polypeptide is Phosphopentomutase (Lactococcus lactis subsp. cremoris (strain MG1363)).